A 123-amino-acid chain; its full sequence is Large ribosomal subunit protein bL20 (123 aa).

The protein belongs to the bacterial ribosomal protein bL20 family.

Its function is as follows. Binds directly to 23S ribosomal RNA and is necessary for the in vitro assembly process of the 50S ribosomal subunit. It is not involved in the protein synthesizing functions of that subunit. The protein is Large ribosomal subunit protein bL20 of Ehrlichia ruminantium (strain Gardel).